Consider the following 430-residue polypeptide: CinA-like protein (430 aa).

This sequence belongs to the CinA family.

This chain is CinA-like protein, found in Mycobacterium tuberculosis (strain ATCC 25177 / H37Ra).